Here is a 246-residue protein sequence, read N- to C-terminus: Putative carbonic anhydrase 3 (246 aa).

Positions 3–244 constitute an Alpha-carbonic anhydrase domain; sequence GHWSYCDDDE…LNDRKIVHIV (242 aa). Histidine 61 acts as the Proton acceptor in catalysis. Histidine 91, histidine 93, and histidine 116 together coordinate Zn(2+). 187-188 lines the substrate pocket; it reads TT.

Belongs to the alpha-carbonic anhydrase family. Zn(2+) serves as cofactor.

It catalyses the reaction hydrogencarbonate + H(+) = CO2 + H2O. In terms of biological role, reversible hydration of carbon dioxide. This Caenorhabditis elegans protein is Putative carbonic anhydrase 3 (cah-3).